The following is a 1018-amino-acid chain: UPF0182 protein Tfu_0541 (1018 aa).

Transmembrane regions (helical) follow at residues 20-40, 64-84, 115-135, 171-191, 212-232, 254-274, and 287-307; these read LAPV…AANF, ALLF…SVYF, VFFW…ATAE, VIIG…VVVH, VHLS…YWLE, AVLY…VLFF, and VSLG…PAIV. Disordered regions lie at residues 497–570 and 939–965; these read YPVD…QANN and GDEA…ASSD. Composition is skewed to acidic residues over residues 542-560 and 939-959; these read QDQE…EEEQ and GDEA…EEEQ.

Belongs to the UPF0182 family.

It localises to the cell membrane. The polypeptide is UPF0182 protein Tfu_0541 (Thermobifida fusca (strain YX)).